Consider the following 248-residue polypeptide: Probable septum site-determining protein MinC (248 aa).

The interval 94 to 126 (GMPPAMRGGQPAADFEAPAGEPQANPGAPEPQI) is disordered.

This sequence belongs to the MinC family. Interacts with MinD and FtsZ.

Functionally, cell division inhibitor that blocks the formation of polar Z ring septums. Rapidly oscillates between the poles of the cell to destabilize FtsZ filaments that have formed before they mature into polar Z rings. Prevents FtsZ polymerization. The sequence is that of Probable septum site-determining protein MinC from Brucella suis biovar 1 (strain 1330).